The sequence spans 308 residues: Staphylococcal superantigen-like 4 (308 aa).

The N-terminal stretch at 1–30 (MKITTIAKTSLALGLLTTGVITTTTQAANA) is a signal peptide. The disordered stretch occupies residues 32–117 (TLSSTKVEAP…TTKQVPTEIN (86 aa)). 2 stretches are compositionally biased toward polar residues: residues 33 to 47 (LSSTKVEAPQSTPPS) and 55 to 76 (SKPNATTPPSTKVEAPQQTANA). Positions 77-93 (TTPPSTKVTTPPSTNTP) are enriched in low complexity. Residues 94-114 (QPMQSTKSDTPQSPTTKQVPT) show a composition bias toward polar residues. A sialyl Lewis X-binding region spans residues 180 to 278 (VDVFVVLEEN…VIKMKNGGKY (99 aa)).

The protein belongs to the staphylococcal/streptococcal toxin family.

It is found in the secreted. In terms of biological role, secreted protein that plays a role in immune innate response inhibition by interfering with host TLR2-mediated pathway. This is Staphylococcal superantigen-like 4 from Staphylococcus aureus (strain NCTC 8325 / PS 47).